The chain runs to 545 residues: Lysine--tRNA ligase (545 aa).

The 'HIGH' region signature appears at 42–50; sequence PSGVPHIGH. The 'KMSKS' region signature appears at 307 to 311; it reads PLSSS.

It belongs to the class-I aminoacyl-tRNA synthetase family.

The protein localises to the cytoplasm. The catalysed reaction is tRNA(Lys) + L-lysine + ATP = L-lysyl-tRNA(Lys) + AMP + diphosphate. This is Lysine--tRNA ligase from Haloarcula marismortui (strain ATCC 43049 / DSM 3752 / JCM 8966 / VKM B-1809) (Halobacterium marismortui).